The primary structure comprises 230 residues: NEDD8-conjugating enzyme Ubc12 (230 aa).

The interval 1 to 87 is disordered; the sequence is MFRLKELQKK…AELRAQKDID (87 aa). The segment covering 10–20 has biased composition (low complexity); the sequence is KQQQQQQQQQQ. The span at 26–36 shows a compositional bias: polar residues; the sequence is TNGTDAVTTEP. Positions 37–57 are enriched in basic and acidic residues; it reads TDVKRQNSNDLKEIRKQKSKD. Residues 61 to 70 show a composition bias toward polar residues; the sequence is SLKTKQSSES. The region spanning 77-221 is the UBC core domain; it reads PAELRAQKDI…VRQSLRGGYI (145 aa). Residue C159 is the Glycyl thioester intermediate of the active site.

Belongs to the ubiquitin-conjugating enzyme family. UBC12 subfamily.

It catalyses the reaction [E1 NEDD8-activating enzyme]-S-[NEDD8 protein]-yl-L-cysteine + [E2 NEDD8-conjugating enzyme]-L-cysteine = [E1 NEDD8-activating enzyme]-L-cysteine + [E2 NEDD8-conjugating enzyme]-S-[NEDD8-protein]-yl-L-cysteine.. It functions in the pathway protein modification; protein neddylation. Functionally, accepts the ubiquitin-like protein nedd8 from the uba3-nae1 E1 complex and catalyzes its covalent attachment to other proteins. This chain is NEDD8-conjugating enzyme Ubc12 (ube2m), found in Dictyostelium discoideum (Social amoeba).